The following is a 143-amino-acid chain: Insertion element IS2 uncharacterized 16.4 kDa protein (143 aa).

The polypeptide is Insertion element IS2 uncharacterized 16.4 kDa protein (Escherichia coli).